Reading from the N-terminus, the 438-residue chain is Enolase (438 aa).

Glutamine 164 provides a ligand contact to (2R)-2-phosphoglycerate. The active-site Proton donor is glutamate 206. Residues aspartate 243, glutamate 289, and aspartate 316 each contribute to the Mg(2+) site. 4 residues coordinate (2R)-2-phosphoglycerate: lysine 341, arginine 370, serine 371, and lysine 392. The Proton acceptor role is filled by lysine 341.

Belongs to the enolase family. The cofactor is Mg(2+).

It localises to the cytoplasm. Its subcellular location is the secreted. The protein resides in the cell surface. It catalyses the reaction (2R)-2-phosphoglycerate = phosphoenolpyruvate + H2O. It participates in carbohydrate degradation; glycolysis; pyruvate from D-glyceraldehyde 3-phosphate: step 4/5. Functionally, catalyzes the reversible conversion of 2-phosphoglycerate (2-PG) into phosphoenolpyruvate (PEP). It is essential for the degradation of carbohydrates via glycolysis. This Borrelia garinii subsp. bavariensis (strain ATCC BAA-2496 / DSM 23469 / PBi) (Borreliella bavariensis) protein is Enolase.